We begin with the raw amino-acid sequence, 109 residues long: MPRIKSAIKRVQIAERNRLRNKATKAMVRALMKKVISLSTAYAANPQQETLQEIQAAMSAAFSRIDKAAKTGVLHKNTAARRKARLARIVKLSVASSEKSQAEALVEHG.

The protein belongs to the bacterial ribosomal protein bS20 family.

Binds directly to 16S ribosomal RNA. The polypeptide is Small ribosomal subunit protein bS20 (Synechococcus sp. (strain JA-2-3B'a(2-13)) (Cyanobacteria bacterium Yellowstone B-Prime)).